Here is a 323-residue protein sequence, read N- to C-terminus: Viral cathepsin (323 aa).

Residues 1-18 form the signal peptide; that stretch reads MSKFLLYWFVYGVVCSAA. The propeptide at 19–112 is activation peptide; that stretch reads YDILKAPNYF…VVLDRPPGKG (94 aa). 3 cysteine pairs are disulfide-bonded: cysteine 133–cysteine 174, cysteine 167–cysteine 207, and cysteine 262–cysteine 310. Cysteine 136 is an active-site residue. Asparagine 158 carries an N-linked (GlcNAc...) asparagine; by host glycan. Active-site residues include histidine 269 and asparagine 289.

This sequence belongs to the peptidase C1 family. Synthesized as an inactive proenzyme and activated by proteolytic removal of the inhibitory propeptide.

The enzyme catalyses Endopeptidase of broad specificity, hydrolyzing substrates of both cathepsin L and cathepsin B.. In terms of biological role, cysteine protease that plays an essential role in host liquefaction to facilitate horizontal transmission of the virus. May participate in the degradation of foreign protein expressed by the baculovirus system. This Lepidoptera (butterflies and moths) protein is Viral cathepsin (VCATH).